Reading from the N-terminus, the 134-residue chain is Cytochrome b5 (134 aa).

The residue at position 2 (alanine 2) is an N-acetylalanine. An N6-acetyllysine mark is found at lysine 7, lysine 10, and lysine 19. A Cytochrome b5 heme-binding domain is found at 9-85; it reads VKYYTLEEIQ…SKTYIIGELH (77 aa). Positions 44 and 68 each coordinate heme. The helical transmembrane segment at 109–131 threads the bilayer; that stretch reads WWTNWVIPAISALAVALMYRLYM.

The protein belongs to the cytochrome b5 family.

It localises to the endoplasmic reticulum membrane. Its subcellular location is the microsome membrane. Functionally, cytochrome b5 is a membrane-bound hemoprotein functioning as an electron carrier for several membrane-bound oxygenases. It is also involved in several steps of the sterol biosynthesis pathway, particularly in the C-5 double bond introduction during the C-5 desaturation. This is Cytochrome b5 (Cyb5a) from Mus musculus (Mouse).